The sequence spans 104 residues: L-rhamnose mutarotase (104 aa).

Residue Tyr18 coordinates substrate. The active-site Proton donor is the His22. Substrate contacts are provided by residues Tyr41 and 76-77; that span reads WW.

This sequence belongs to the rhamnose mutarotase family. In terms of assembly, homodimer.

The protein resides in the cytoplasm. The catalysed reaction is alpha-L-rhamnose = beta-L-rhamnose. It functions in the pathway carbohydrate metabolism; L-rhamnose metabolism. Functionally, involved in the anomeric conversion of L-rhamnose. This chain is L-rhamnose mutarotase, found in Burkholderia orbicola (strain MC0-3).